Consider the following 425-residue polypeptide: Enolase 2 (425 aa).

Gln-163 lines the (2R)-2-phosphoglycerate pocket. Catalysis depends on Glu-205, which acts as the Proton donor. Asp-242, Glu-285, and Asp-312 together coordinate Mg(2+). 4 residues coordinate (2R)-2-phosphoglycerate: Lys-337, Arg-366, Ser-367, and Lys-388. Lys-337 acts as the Proton acceptor in catalysis.

Belongs to the enolase family. Requires Mg(2+) as cofactor.

The protein localises to the cytoplasm. It localises to the secreted. Its subcellular location is the cell surface. The catalysed reaction is (2R)-2-phosphoglycerate = phosphoenolpyruvate + H2O. It functions in the pathway carbohydrate degradation; glycolysis; pyruvate from D-glyceraldehyde 3-phosphate: step 4/5. Its function is as follows. Catalyzes the reversible conversion of 2-phosphoglycerate (2-PG) into phosphoenolpyruvate (PEP). It is essential for the degradation of carbohydrates via glycolysis. The chain is Enolase 2 from Cupriavidus metallidurans (strain ATCC 43123 / DSM 2839 / NBRC 102507 / CH34) (Ralstonia metallidurans).